Reading from the N-terminus, the 671-residue chain is Palmitoleoyl-protein carboxylesterase NOTUM (671 aa).

Positions 1-46 are cleaved as a signal peptide; sequence MAVEQIDKMAAKAGEATNKWIKPQQPLLTLLLLLATFSQLPAVCSS. N-linked (GlcNAc...) asparagine glycosylation is present at N95. Residues S237 and D338 each act as charge relay system in the active site. N372 carries an N-linked (GlcNAc...) asparagine glycan. H384 (charge relay system) is an active-site residue. Positions 411 to 592 are disordered; it reads HSTRSRRHDK…TKSKKRHRVP (182 aa). Positions 439-454 are enriched in basic residues; that stretch reads NQRHQRHRQRLQRQKH. Basic and acidic residues predominate over residues 470–486; that stretch reads LSKEEREERKRLRQEQR. Residues 487-497 show a composition bias toward basic residues; sequence QRRKQRRRQQQ. Residues 505–514 show a composition bias toward basic and acidic residues; sequence QEHRNKKDNS. Residues 570–583 show a composition bias toward polar residues; that stretch reads PQKTRSSNNASAGT. Residues N578 and N612 are each glycosylated (N-linked (GlcNAc...) asparagine).

Belongs to the pectinacetylesterase family. Notum subfamily.

The protein localises to the secreted. It is found in the cell surface. It catalyses the reaction [Wnt protein]-O-(9Z)-hexadecenoyl-L-serine + H2O = [Wnt protein]-L-serine + (9Z)-hexadecenoate + H(+). Carboxylesterase that acts as a key negative regulator of the Wnt signaling pathway by specifically mediating depalmitoleoylation of WNT proteins. Serine palmitoleoylation of WNT proteins is required for efficient binding to frizzled receptors. Also acts as a regulator of long-range activity of Hedgehog (hh), possibly by regulating the switch between low and high level hh pathway signaling. This is Palmitoleoyl-protein carboxylesterase NOTUM from Drosophila melanogaster (Fruit fly).